The primary structure comprises 93 residues: Cobalt transport protein CbiN (93 aa).

Helical transmembrane passes span 5 to 25 (LILLAMVVALMILPFFINHGG) and 63 to 83 (LLFTLQGSLGAAVIFYILGYA).

The protein belongs to the CbiN family. Forms an energy-coupling factor (ECF) transporter complex composed of an ATP-binding protein (A component, CbiO), a transmembrane protein (T component, CbiQ) and 2 possible substrate-capture proteins (S components, CbiM and CbiN) of unknown stoichimetry.

It localises to the cell inner membrane. It participates in cofactor biosynthesis; adenosylcobalamin biosynthesis. Functionally, part of the energy-coupling factor (ECF) transporter complex CbiMNOQ involved in cobalt import. This is Cobalt transport protein CbiN from Klebsiella pneumoniae (strain 342).